A 125-amino-acid chain; its full sequence is Large ribosomal subunit protein bL12 (125 aa).

It belongs to the bacterial ribosomal protein bL12 family. In terms of assembly, homodimer. Part of the ribosomal stalk of the 50S ribosomal subunit. Forms a multimeric L10(L12)X complex, where L10 forms an elongated spine to which 2 to 4 L12 dimers bind in a sequential fashion. Binds GTP-bound translation factors.

Functionally, forms part of the ribosomal stalk which helps the ribosome interact with GTP-bound translation factors. Is thus essential for accurate translation. This is Large ribosomal subunit protein bL12 from Helicobacter pylori (strain ATCC 700392 / 26695) (Campylobacter pylori).